The chain runs to 92 residues: MPRSLKKGPFIDLHLLKKVEKAVESGDKKPIKTWSRRSMIIPTMIGLTIAVHNGRQHVPVFVTEEMIGHKLGEFAPTRTYRGHAADKKAKKK.

This sequence belongs to the universal ribosomal protein uS19 family.

In terms of biological role, protein S19 forms a complex with S13 that binds strongly to the 16S ribosomal RNA. The protein is Small ribosomal subunit protein uS19 of Vibrio atlanticus (strain LGP32) (Vibrio splendidus (strain Mel32)).